We begin with the raw amino-acid sequence, 994 residues long: MEQAHTKTTEECLAYFGVNENTGLSLDQVKKNFDKFGPNELPAEEGKSLWELVAEQFEDLLVRILLLAAIISFVLAWFEEGEETVTAFVEPFVILLILIANAVVGVWQERNAEDAIEALKEYEPEMGKVYRSDRKSVQRIKARELVPGDIVEVAVGDKVPADIRLISIKSTTLRIDQSILTGESVSVIKHTEVVPDTRAVNQDKKNMLFSGTNVGAGKAVGVVIATGPNTEIGKIRDEMAATEQEKTPLQQKLDEFGEQLSKVISLICVAVWLINIGHFNDPIHGGSWIKGAIYYFKIAVALAVAAIPEGLPAVITTCLALGTRRMAKKNAIVRSLPSVETLGCTSVICSDKTGTLTTNQMSVCRMFVIDKVEGDVTSLNEFTITGSTYAPEGDVQKNDKNVKAGQYDGLVELATICALCNDSSLDFNESKGVFEKVGEATETALTTLVEKMNVFNTDVKSLSKVERANACNSVIKQLMKKEFTLEFSRDRKSMSVYCIPAKASRAAVGNKMFVKGAPEGVIDRCNYVRVGTTRVPLTSAIKDKILSVVKEWGTGRDTLRCLALATRDTPPKREDMVLDEATRFIEYETDLTFVGCVGMLDPPRKEVMGSIQLCREAGIRVIMITGDNKGTAIAICRRIGIFGEDDDVSGRAFTGREFDDLPPAEQREACKRASCFARVEPAHKSKIVEFLQSFDEITAMTGDGVNDAPALKKAEIGIAMGSGTAVAKTASEMVLADDNFSTIVAAVEEGRAIYNNMKQFIRYLISSNVGEVVCIFLTAALGLPEALIPVQLLWVNLVTDGLPATALGFNPPDLDIMDRPPRSPKEPLISGWLFFRYMAIGGYVGAATVGAAAWWFMYADDGPNVTFYQLSHFMQCTEDNPDFEGHECEIFESPVPMTMALSVLVTIEMCNALNSLSENQSLIRMPPWSNFWLLGSICLSMSLHFLILYVEPLPMIFKLTPLNVEQWFIVLKMSFPVILLDELLKFVARNYLEG.

Residues 1–48 (MEQAHTKTTEECLAYFGVNENTGLSLDQVKKNFDKFGPNELPAEEGKS) lie on the Cytoplasmic side of the membrane. Residues 49–69 (LWELVAEQFEDLLVRILLLAA) traverse the membrane as a helical segment. Residues 70-89 (IISFVLAWFEEGEETVTAFV) are Lumenal-facing. A helical transmembrane segment spans residues 90–110 (EPFVILLILIANAVVGVWQER). The Cytoplasmic portion of the chain corresponds to 111–253 (NAEDAIEALK…QEKTPLQQKL (143 aa)). The helical transmembrane segment at 254–273 (DEFGEQLSKVISLICVAVWL) threads the bilayer. At 274–295 (INIGHFNDPIHGGSWIKGAIYY) the chain is on the lumenal side. The chain crosses the membrane as a helical span at residues 296–313 (FKIAVALAVAAIPEGLPA). Residues V304, A305, I307, and E309 each coordinate Ca(2+). Topologically, residues 314–757 (VITTCLALGT…EEGRAIYNNM (444 aa)) are cytoplasmic. The active-site 4-aspartylphosphate intermediate is D351. Mg(2+) contacts are provided by D351 and T353. ATP is bound by residues T353, E442, R489, K515, R560, T625, G626, D627, R678, and K684. D703 lines the Mg(2+) pocket. N706 is an ATP binding site. The chain crosses the membrane as a helical span at residues 758–777 (KQFIRYLISSNVGEVVCIFL). Ca(2+) contacts are provided by N768 and E771. Topologically, residues 778 to 787 (TAALGLPEAL) are lumenal. A helical membrane pass occupies residues 788-808 (IPVQLLWVNLVTDGLPATALG). Residues 788-808 (IPVQLLWVNLVTDGLPATALG) form an interaction with PLN region. Residues N796, T799, and D800 each contribute to the Ca(2+) site. At 809 to 828 (FNPPDLDIMDRPPRSPKEPL) the chain is on the cytoplasmic side. Residues 829–851 (ISGWLFFRYMAIGGYVGAATVGA) form a helical membrane-spanning segment. Topologically, residues 852–897 (AAWWFMYADDGPNVTFYQLSHFMQCTEDNPDFEGHECEIFESPVPM) are lumenal. A disulfide bridge connects residues C876 and C888. Residues 898 to 917 (TMALSVLVTIEMCNALNSLS) form a helical membrane-spanning segment. Residue E908 coordinates Ca(2+). Residues 918–930 (ENQSLIRMPPWSN) lie on the Cytoplasmic side of the membrane. Residues 931–949 (FWLLGSICLSMSLHFLILY) traverse the membrane as a helical segment. The interaction with PLN stretch occupies residues 932–943 (WLLGSICLSMSL). Topologically, residues 950–964 (VEPLPMIFKLTPLNV) are lumenal. A helical membrane pass occupies residues 965–985 (EQWFIVLKMSFPVILLDELLK). Residues 986–994 (FVARNYLEG) lie on the Cytoplasmic side of the membrane.

The protein belongs to the cation transport ATPase (P-type) (TC 3.A.3) family. Type IIA subfamily. Interacts with sarcolipin (SLN). Interacts with phospholamban (PLN). Interacts with myoregulin (MRLN). Interacts with DWORF. Interacts with VMP1. Requires Mg(2+) as cofactor.

The protein resides in the endoplasmic reticulum membrane. It is found in the sarcoplasmic reticulum membrane. It carries out the reaction Ca(2+)(in) + ATP + H2O = Ca(2+)(out) + ADP + phosphate + H(+). Inhibited by sarcolipin (SLN) and myoregulin (MRLN). Also shown to be inhibited by phospholamban (PLN) in vitro. Enhanced by DWORF; DWORF increases activity by displacing sarcolipin (SLN), phospholamban (PLN) and myoregulin (MRLN). Functionally, key regulator of striated muscle performance by acting as the major Ca(2+) ATPase responsible for the reuptake of cytosolic Ca(2+) into the sarcoplasmic reticulum. Catalyzes the hydrolysis of ATP coupled with the translocation of calcium from the cytosol to the sarcoplasmic reticulum lumen. Contributes to calcium sequestration involved in muscular excitation/contraction. The sequence is that of Sarcoplasmic/endoplasmic reticulum calcium ATPase 1 (ATP2A1) from Pelophylax lessonae (Pool frog).